The primary structure comprises 56 residues: Large ribosomal subunit protein bL33 (56 aa).

The protein belongs to the bacterial ribosomal protein bL33 family.

The chain is Large ribosomal subunit protein bL33 (rpmG) from Treponema pallidum (strain Nichols).